A 426-amino-acid chain; its full sequence is Serine--tRNA ligase (426 aa).

235–237 serves as a coordination point for L-serine; sequence TAE. Position 266-268 (266-268) interacts with ATP; it reads RRE. E289 provides a ligand contact to L-serine. 353–356 lines the ATP pocket; the sequence is EISS. S389 is a binding site for L-serine.

It belongs to the class-II aminoacyl-tRNA synthetase family. Type-1 seryl-tRNA synthetase subfamily. In terms of assembly, homodimer. The tRNA molecule binds across the dimer.

It localises to the cytoplasm. The enzyme catalyses tRNA(Ser) + L-serine + ATP = L-seryl-tRNA(Ser) + AMP + diphosphate + H(+). It catalyses the reaction tRNA(Sec) + L-serine + ATP = L-seryl-tRNA(Sec) + AMP + diphosphate + H(+). It participates in aminoacyl-tRNA biosynthesis; selenocysteinyl-tRNA(Sec) biosynthesis; L-seryl-tRNA(Sec) from L-serine and tRNA(Sec): step 1/1. Catalyzes the attachment of serine to tRNA(Ser). Is also able to aminoacylate tRNA(Sec) with serine, to form the misacylated tRNA L-seryl-tRNA(Sec), which will be further converted into selenocysteinyl-tRNA(Sec). The protein is Serine--tRNA ligase of Trichormus variabilis (strain ATCC 29413 / PCC 7937) (Anabaena variabilis).